Consider the following 184-residue polypeptide: Spiro-conjugate synthase (184 aa).

The cysteines at positions 57 and 184 are disulfide-linked. Gln115 serves as a coordination point for (1S,3R,6R,8R,9R,11R,14S,15S,19R,20R)-8-ethyl-9,15-dihydroxy-3,4,6,20-tetramethyl-21,23-dioxo-24-azapentacyclo[20.2.1.0(1,6).0(11,20).0(14,19)]pentacosa-4,12,22(25)-trien-25-olate.

Homodimer.

It carries out the reaction 4-[(1R,2R,4aS,5S,8aR)-2-[(2R,3R,5E,7E)-3-ethyl-2-hydroxy-5,7-dimethylnona-5,7-dien-1-yl]-5-hydroxy-1-methyl-1,2,4a,5,6,7,8,8a-octahydronaphthalene-1-carbonyl]-2-methylidene-5-oxo-2,5-dihydro-1H-pyrrol-3-olate = (1S,3R,6R,8R,9R,11R,14S,15S,19R,20R)-8-ethyl-9,15-dihydroxy-3,4,6,20-tetramethyl-21,23-dioxo-24-azapentacyclo[20.2.1.0(1,6).0(11,20).0(14,19)]pentacosa-4,12,22(25)-trien-25-olate. It functions in the pathway antibiotic biosynthesis. Its function is as follows. Involved in the biosynthesis of the spirotetramate antibiotics pyrroindomycins. Catalyzes the intramolecular cyclization forming the spiro-conjugate moiety in pyrroindomycins, via an exo-selective [4+2] cycloaddition reaction. This chain is Spiro-conjugate synthase, found in Streptomyces rugosporus.